The sequence spans 484 residues: Major extracellular endoglucanase (484 aa).

The first 25 residues, methionine 1–serine 25, serve as a signal peptide directing secretion. Residue glutamate 182 is the Proton donor of the active site. The active-site Nucleophile is the glutamate 303. Positions glycine 370–serine 402 are disordered. A thr-Pro repeats ('hinge') (Pro-Thr box) region spans residues threonine 375–proline 399. The span at threonine 378–threonine 398 shows a compositional bias: pro residues. The CBM2 domain maps to proline 395–serine 484.

Belongs to the glycosyl hydrolase 5 (cellulase A) family.

The catalysed reaction is Endohydrolysis of (1-&gt;4)-beta-D-glucosidic linkages in cellulose, lichenin and cereal beta-D-glucans.. The chain is Major extracellular endoglucanase (engXCA) from Xanthomonas campestris pv. campestris (strain ATCC 33913 / DSM 3586 / NCPPB 528 / LMG 568 / P 25).